Reading from the N-terminus, the 428-residue chain is Histidinol dehydrogenase (428 aa).

The substrate site is built by Ser-232, Gln-254, and His-257. Positions 254 and 257 each coordinate Zn(2+). Active-site proton acceptor residues include Glu-324 and His-325. Substrate-binding residues include His-325, Asp-358, Glu-412, and His-417. Position 358 (Asp-358) interacts with Zn(2+). Residue His-417 participates in Zn(2+) binding.

Belongs to the histidinol dehydrogenase family. Zn(2+) serves as cofactor.

It catalyses the reaction L-histidinol + 2 NAD(+) + H2O = L-histidine + 2 NADH + 3 H(+). The protein operates within amino-acid biosynthesis; L-histidine biosynthesis; L-histidine from 5-phospho-alpha-D-ribose 1-diphosphate: step 9/9. In terms of biological role, catalyzes the sequential NAD-dependent oxidations of L-histidinol to L-histidinaldehyde and then to L-histidine. This Thermotoga maritima (strain ATCC 43589 / DSM 3109 / JCM 10099 / NBRC 100826 / MSB8) protein is Histidinol dehydrogenase.